Reading from the N-terminus, the 331-residue chain is Anthranilate phosphoribosyltransferase (331 aa).

Residues Gly-79, Gly-82–Asp-83, Ser-87, Asn-89–Thr-92, Lys-107–Gly-115, and Ser-119 contribute to the 5-phospho-alpha-D-ribose 1-diphosphate site. Gly-79 lines the anthranilate pocket. Ser-91 is a binding site for Mg(2+). Anthranilate is bound at residue Asn-110. Arg-165 contributes to the anthranilate binding site. Mg(2+) is bound by residues Asp-223 and Glu-224.

Belongs to the anthranilate phosphoribosyltransferase family. Homodimer. Requires Mg(2+) as cofactor.

The enzyme catalyses N-(5-phospho-beta-D-ribosyl)anthranilate + diphosphate = 5-phospho-alpha-D-ribose 1-diphosphate + anthranilate. Its pathway is amino-acid biosynthesis; L-tryptophan biosynthesis; L-tryptophan from chorismate: step 2/5. Functionally, catalyzes the transfer of the phosphoribosyl group of 5-phosphorylribose-1-pyrophosphate (PRPP) to anthranilate to yield N-(5'-phosphoribosyl)-anthranilate (PRA). In Buchnera aphidicola subsp. Melaphis rhois, this protein is Anthranilate phosphoribosyltransferase.